A 452-amino-acid polypeptide reads, in one-letter code: Tripartite motif-containing protein 49D (452 aa).

Residues 15–56 (CPICLNYFIDPVTIDCGHSFCRPCFYLNWQDIPILTQCFECL) form an RING-type zinc finger. The B box-type zinc finger occupies 88 to 129 (SEEQMCGTHRETKKIFCEVDRSLLCLLCSSSLEHRYHRHCPA). Zn(2+)-binding residues include Cys93, His96, Cys115, and His121. One can recognise a B30.2/SPRY domain in the interval 269–452 (ELRAGPITGL…LRPIFCCVHL (184 aa)).

This sequence belongs to the TRIM/RBCC family.

This chain is Tripartite motif-containing protein 49D, found in Homo sapiens (Human).